The sequence spans 222 residues: GTP cyclohydrolase 1 (222 aa).

Residues Cys111, His114, and Cys182 each coordinate Zn(2+).

It belongs to the GTP cyclohydrolase I family. In terms of assembly, toroid-shaped homodecamer, composed of two pentamers of five dimers.

The enzyme catalyses GTP + H2O = 7,8-dihydroneopterin 3'-triphosphate + formate + H(+). The protein operates within cofactor biosynthesis; 7,8-dihydroneopterin triphosphate biosynthesis; 7,8-dihydroneopterin triphosphate from GTP: step 1/1. This chain is GTP cyclohydrolase 1, found in Enterobacter sp. (strain 638).